The chain runs to 621 residues: 1-deoxy-D-xylulose-5-phosphate synthase (621 aa).

Residues H76 and 117 to 119 each bind thiamine diphosphate; that span reads AHS. D148 contributes to the Mg(2+) binding site. Thiamine diphosphate-binding positions include 149-150, N178, Y285, and E367; that span reads GA. N178 contributes to the Mg(2+) binding site.

It belongs to the transketolase family. DXPS subfamily. Homodimer. Requires Mg(2+) as cofactor. The cofactor is thiamine diphosphate.

The enzyme catalyses D-glyceraldehyde 3-phosphate + pyruvate + H(+) = 1-deoxy-D-xylulose 5-phosphate + CO2. The protein operates within metabolic intermediate biosynthesis; 1-deoxy-D-xylulose 5-phosphate biosynthesis; 1-deoxy-D-xylulose 5-phosphate from D-glyceraldehyde 3-phosphate and pyruvate: step 1/1. Its function is as follows. Catalyzes the acyloin condensation reaction between C atoms 2 and 3 of pyruvate and glyceraldehyde 3-phosphate to yield 1-deoxy-D-xylulose-5-phosphate (DXP). The chain is 1-deoxy-D-xylulose-5-phosphate synthase from Aromatoleum aromaticum (strain DSM 19018 / LMG 30748 / EbN1) (Azoarcus sp. (strain EbN1)).